A 175-amino-acid chain; its full sequence is Ribosome maturation factor RimM (175 aa).

The region spanning 100 to 173 is the PRC barrel domain; that stretch reads EGEYYFHEII…TIIIRPMEGL (74 aa).

This sequence belongs to the RimM family. As to quaternary structure, binds ribosomal protein uS19.

It localises to the cytoplasm. In terms of biological role, an accessory protein needed during the final step in the assembly of 30S ribosomal subunit, possibly for assembly of the head region. Essential for efficient processing of 16S rRNA. May be needed both before and after RbfA during the maturation of 16S rRNA. It has affinity for free ribosomal 30S subunits but not for 70S ribosomes. This Geobacillus kaustophilus (strain HTA426) protein is Ribosome maturation factor RimM.